Reading from the N-terminus, the 1142-residue chain is Protein lin-25 (1142 aa).

The span at 600 to 613 shows a compositional bias: acidic residues; the sequence is IEEEIEEEEEDIEP. The disordered stretch occupies residues 600–706; sequence IEEEIEEEEE…EKPKEPLEPT (107 aa). Basic and acidic residues-rich tracts occupy residues 614 to 627, 652 to 662, and 679 to 703; these read EVVK…TEKE, DEQKTEEKMDT, and DPPK…KEPL.

It localises to the nucleus. The protein resides in the cytoplasm. In terms of biological role, participates in the inductive signaling pathway downstream of let-60 Ras and the RAF/MAP kinase cascade to regulate specification and differentiation of many cell types. Positively regulates the fate of vulval precursor cells. Required for induction of the P12 and excretory duct cell fates. In males, it is also required for proper formation of spicules. Does not function in the signaling pathway that promotes exit from pachytene. This Caenorhabditis briggsae protein is Protein lin-25.